We begin with the raw amino-acid sequence, 92 residues long: Cell division topological specificity factor (92 aa).

This sequence belongs to the MinE family.

Its function is as follows. Prevents the cell division inhibition by proteins MinC and MinD at internal division sites while permitting inhibition at polar sites. This ensures cell division at the proper site by restricting the formation of a division septum at the midpoint of the long axis of the cell. The polypeptide is Cell division topological specificity factor (Desulforamulus reducens (strain ATCC BAA-1160 / DSM 100696 / MI-1) (Desulfotomaculum reducens)).